Reading from the N-terminus, the 147-residue chain is Sentan (147 aa).

Residues 1 to 36 (MGGCMHSTWDHALHSRGEPRPSEAPASISAPSKMPK) form a disordered region. Residues 8–21 (TWDHALHSRGEPRP) are compositionally biased toward basic and acidic residues. The span at 23–32 (EAPASISAPS) shows a compositional bias: low complexity.

This sequence belongs to the S-100 family. In terms of tissue distribution, expressed exclusively in ciliated epithelial cells. Detected in ciliated epithelium of trachea and oviduct (at protein level).

The protein resides in the cell projection. It is found in the cilium. Functionally, may be a component of the linker structure that bridges the ciliary membrane and peripheral singlet microtubules. The polypeptide is Sentan (Sntn) (Mus musculus (Mouse)).